The chain runs to 281 residues: Shikimate dehydrogenase (NADP(+)) (281 aa).

Shikimate contacts are provided by residues serine 14–serine 16 and threonine 61. Residue lysine 65 is the Proton acceptor of the active site. Residues asparagine 86 and aspartate 101 each coordinate shikimate. Residues glycine 127 to alanine 131, asparagine 151 to arginine 156, and valine 216 each bind NADP(+). Residue tyrosine 218 participates in shikimate binding. An NADP(+)-binding site is contributed by glycine 239.

It belongs to the shikimate dehydrogenase family. Homodimer.

It catalyses the reaction shikimate + NADP(+) = 3-dehydroshikimate + NADPH + H(+). It functions in the pathway metabolic intermediate biosynthesis; chorismate biosynthesis; chorismate from D-erythrose 4-phosphate and phosphoenolpyruvate: step 4/7. In terms of biological role, involved in the biosynthesis of the chorismate, which leads to the biosynthesis of aromatic amino acids. Catalyzes the reversible NADPH linked reduction of 3-dehydroshikimate (DHSA) to yield shikimate (SA). The polypeptide is Shikimate dehydrogenase (NADP(+)) (Azorhizobium caulinodans (strain ATCC 43989 / DSM 5975 / JCM 20966 / LMG 6465 / NBRC 14845 / NCIMB 13405 / ORS 571)).